Consider the following 451-residue polypeptide: Chaperone SurA (451 aa).

The N-terminal stretch at methionine 1 to serine 26 is a signal peptide. 2 PpiC domains span residues aspartate 179–glycine 280 and lysine 290–glycine 388.

The protein resides in the periplasm. It carries out the reaction [protein]-peptidylproline (omega=180) = [protein]-peptidylproline (omega=0). In terms of biological role, chaperone involved in the correct folding and assembly of outer membrane proteins. Recognizes specific patterns of aromatic residues and the orientation of their side chains, which are found more frequently in integral outer membrane proteins. May act in both early periplasmic and late outer membrane-associated steps of protein maturation. This chain is Chaperone SurA, found in Hydrogenovibrio crunogenus (strain DSM 25203 / XCL-2) (Thiomicrospira crunogena).